Consider the following 259-residue polypeptide: MVFRKSLLKLAVFALGACVAFSNANAAEGKLESIKSKGQLIVGVKNDVPHYALLDQATGEIKGFEVDVAKLLAKSILGDDKKIKLVAVNAKTRGPLLDNGSVDAVIATFTITPERKRIYNFSEPYYQDAIGLLVLKEKKYKSLADMKGANIGVAQAATTKKAIGEAAKKIGIDVKFSEFPDYPSIKAALDAKRVDAFSVDKSILLGYVDDKSEILPDSFEPQSYGIVTKKDDPAFAKYVDDFVKEHKNEIDALAKKWGL.

An N-terminal signal peptide occupies residues 1–26 (MVFRKSLLKLAVFALGACVAFSNANA).

The protein belongs to the bacterial solute-binding protein 3 family.

Its subcellular location is the cell surface. In terms of biological role, common antigen and a major cell adherence molecule. Most probably involved, with PEB1C, in a binding-protein-dependent transport system for an amino acid. May be involved in binding to intestinal cells. The sequence is that of Major cell-binding factor (peb1A) from Campylobacter jejuni subsp. jejuni serotype O:2 (strain ATCC 700819 / NCTC 11168).